A 486-amino-acid polypeptide reads, in one-letter code: Probable glycine dehydrogenase (decarboxylating) subunit 2 (486 aa).

Residue lysine 273 is modified to N6-(pyridoxal phosphate)lysine.

It belongs to the GcvP family. C-terminal subunit subfamily. The glycine cleavage system is composed of four proteins: P, T, L and H. In this organism, the P 'protein' is a heterodimer of two subunits. Pyridoxal 5'-phosphate is required as a cofactor.

It catalyses the reaction N(6)-[(R)-lipoyl]-L-lysyl-[glycine-cleavage complex H protein] + glycine + H(+) = N(6)-[(R)-S(8)-aminomethyldihydrolipoyl]-L-lysyl-[glycine-cleavage complex H protein] + CO2. In terms of biological role, the glycine cleavage system catalyzes the degradation of glycine. The P protein binds the alpha-amino group of glycine through its pyridoxal phosphate cofactor; CO(2) is released and the remaining methylamine moiety is then transferred to the lipoamide cofactor of the H protein. The protein is Probable glycine dehydrogenase (decarboxylating) subunit 2 of Alkaliphilus oremlandii (strain OhILAs) (Clostridium oremlandii (strain OhILAs)).